Reading from the N-terminus, the 232-residue chain is Large ribosomal subunit protein uL1 (232 aa).

The protein belongs to the universal ribosomal protein uL1 family. As to quaternary structure, part of the 50S ribosomal subunit.

In terms of biological role, binds directly to 23S rRNA. The L1 stalk is quite mobile in the ribosome, and is involved in E site tRNA release. Protein L1 is also a translational repressor protein, it controls the translation of the L11 operon by binding to its mRNA. In Lysinibacillus sphaericus (strain C3-41), this protein is Large ribosomal subunit protein uL1.